The sequence spans 840 residues: OTU domain-containing protein 7B (840 aa).

The interval 49-88 (AGNLSPPFSGGSTCPKTPEKGGSDREPTRPSRPILQRQDD) is disordered. The span at 65 to 77 (TPEKGGSDREPTR) shows a compositional bias: basic and acidic residues. Serine 100 bears the Phosphoserine mark. The tract at residues 152–401 (ERDLIEQSML…AVDPGKGWEW (250 aa)) is TRAF-binding. The catalytic stretch occupies residues 167–440 (AGRLNWWVSM…VKWIPLSSDS (274 aa)). An OTU domain is found at 183–365 (LLPLATTGDG…QAHFSALVSM (183 aa)). The interval 187-193 (ATTGDGN) is regulatory loop. Aspartate 191 is a catalytic residue. The active-site Nucleophile is the cysteine 194. The active-site Proton acceptor is the histidine 358. The span at 440–452 (SQAPLAQPESPTA) shows a compositional bias: polar residues. Disordered stretches follow at residues 440-592 (SQAP…YSQE) and 653-710 (IMNG…VHCQ). Basic and acidic residues-rich tracts occupy residues 456–471 (DEPR…DKES) and 488–500 (SKRD…KRAD). A phosphoserine mark is found at serine 464, serine 467, and serine 471. Residues 483 to 498 (RRKEKSKRDREKDKKR) carry the Nuclear localization signal motif. The span at 531 to 541 (KPGGLGSGSGI) shows a compositional bias: gly residues. Threonine 730 carries the post-translational modification Phosphothreonine. The A20-type zinc finger occupies 793–828 (PPTQTKCKQPNCSFYGHPETNNLCSCCYREELRRRE). 4 residues coordinate Zn(2+): cysteine 799, cysteine 804, cysteine 816, and cysteine 819.

Belongs to the peptidase C64 family. Interacts with TRAF6. Interacts with PARK7, leading to inhibit deubiquitinase activity. Interacts with EGFR, ITCH and NEDD4. Interacts with TRAF3. Interacts with ZAP70 in activated T cells, but not in resting T cells. Post-translationally, phosphorylated by EGFR.

The protein resides in the cytoplasm. The protein localises to the nucleus. The catalysed reaction is Thiol-dependent hydrolysis of ester, thioester, amide, peptide and isopeptide bonds formed by the C-terminal Gly of ubiquitin (a 76-residue protein attached to proteins as an intracellular targeting signal).. Deubiquitinase activity is inhibited following interaction with PARK7. Functionally, negative regulator of the non-canonical NF-kappa-B pathway that acts by mediating deubiquitination of TRAF3, an inhibitor of the NF-kappa-B pathway, thereby acting as a negative regulator of B-cell responses. In response to non-canonical NF-kappa-B stimuli, deubiquitinates 'Lys-48'-linked polyubiquitin chains of TRAF3, preventing TRAF3 proteolysis and over-activation of non-canonical NF-kappa-B. Negatively regulates mucosal immunity against infections. Deubiquitinates ZAP70, and thereby regulates T cell receptor (TCR) signaling that leads to the activation of NF-kappa-B. Plays a role in T cell homeostasis and is required for normal T cell responses, including production of IFNG and IL2. Mediates deubiquitination of EGFR. Has deubiquitinating activity toward 'Lys-11', 'Lys-48' and 'Lys-63'-linked polyubiquitin chains. Has a much higher catalytic rate with 'Lys-11'-linked polyubiquitin chains (in vitro); however the physiological significance of these data are unsure. Hydrolyzes both linear and branched forms of polyubiquitin. Acts as a regulator of mTORC1 and mTORC2 assembly by mediating 'Lys-63'-linked deubiquitination of MLST8, thereby promoting assembly of the mTORC2 complex, while inibiting formation of the mTORC1 complex. This is OTU domain-containing protein 7B (Otud7b) from Mus musculus (Mouse).